The sequence spans 1415 residues: DNA-directed RNA polymerase subunit beta' (1415 aa).

The Zn(2+) site is built by C72, C74, C87, and C90. Residues D463, D465, and D467 each contribute to the Mg(2+) site. Residues C811, C885, C892, and C895 each contribute to the Zn(2+) site.

The protein belongs to the RNA polymerase beta' chain family. As to quaternary structure, the RNAP catalytic core consists of 2 alpha, 1 beta, 1 beta' and 1 omega subunit. When a sigma factor is associated with the core the holoenzyme is formed, which can initiate transcription. Requires Mg(2+) as cofactor. The cofactor is Zn(2+).

It carries out the reaction RNA(n) + a ribonucleoside 5'-triphosphate = RNA(n+1) + diphosphate. Functionally, DNA-dependent RNA polymerase catalyzes the transcription of DNA into RNA using the four ribonucleoside triphosphates as substrates. This chain is DNA-directed RNA polymerase subunit beta', found in Cereibacter sphaeroides (strain ATCC 17025 / ATH 2.4.3) (Rhodobacter sphaeroides).